The chain runs to 1066 residues: Isoleucine--tRNA ligase (1066 aa).

Residues 47 to 57 (PYTTGYIHLGT) carry the 'HIGH' region motif. The 'KMSKS' region signature appears at 594–598 (KMSKS). Residue lysine 597 participates in ATP binding.

It belongs to the class-I aminoacyl-tRNA synthetase family. IleS type 2 subfamily. In terms of assembly, monomer. The cofactor is Zn(2+).

It is found in the cytoplasm. It catalyses the reaction tRNA(Ile) + L-isoleucine + ATP = L-isoleucyl-tRNA(Ile) + AMP + diphosphate. In terms of biological role, catalyzes the attachment of isoleucine to tRNA(Ile). As IleRS can inadvertently accommodate and process structurally similar amino acids such as valine, to avoid such errors it has two additional distinct tRNA(Ile)-dependent editing activities. One activity is designated as 'pretransfer' editing and involves the hydrolysis of activated Val-AMP. The other activity is designated 'posttransfer' editing and involves deacylation of mischarged Val-tRNA(Ile). This is Isoleucine--tRNA ligase from Methanocorpusculum labreanum (strain ATCC 43576 / DSM 4855 / Z).